The sequence spans 342 residues: MYNNSMKLLFLSSLMMGTYLSISSTPWLGTWMGLEINLLSIIPMLTDNKNSMINEPAIKYFIIQSMASTMLLISILIIQMKYMMWWDNKNIPSMMIMSSMMMKMGAAPFHFWLPEVMSSTSWINCLMLMTWQKIAPMMTMSYCIKMSSFLFVVIMMGIIVGAMGGLNQTSLRQILAYSSISHLGWMISSMTISENTWEFYFLIYSTLNVIIIFMFKTMNLFFLNQIYSASYFKTEIKFMMMTSLLSLGGLPPMLGFLPKWIVMQSLIDNKMTALVLLMITFTTITLYYYMRISFSAIIMLHNENSWLTSIKMNKLVVALPILSMISTMGLICTSNFMLLLSS.

A run of 9 helical transmembrane segments spans residues 25–45, 58–78, 94–114, 146–166, 174–194, 195–215, 238–258, 274–294, and 316–336; these read TPWLGTWMGLEINLLSIIPML, IKYFIIQSMASTMLLISILII, MMIMSSMMMKMGAAPFHFWLP, MSSFLFVVIMMGIIVGAMGGL, ILAYSSISHLGWMISSMTISE, NTWEFYFLIYSTLNVIIIFMF, FMMMTSLLSLGGLPPMLGFLP, LVLLMITFTTITLYYYMRISF, and VVALPILSMISTMGLICTSNF.

Belongs to the complex I subunit 2 family.

Its subcellular location is the mitochondrion inner membrane. It carries out the reaction a ubiquinone + NADH + 5 H(+)(in) = a ubiquinol + NAD(+) + 4 H(+)(out). Core subunit of the mitochondrial membrane respiratory chain NADH dehydrogenase (Complex I) that is believed to belong to the minimal assembly required for catalysis. Complex I functions in the transfer of electrons from NADH to the respiratory chain. The immediate electron acceptor for the enzyme is believed to be ubiquinone. The sequence is that of NADH-ubiquinone oxidoreductase chain 2 (ND2) from Locusta migratoria (Migratory locust).